Reading from the N-terminus, the 775-residue chain is Semaphorin-3E (775 aa).

Positions 1-25 (MAPAGHILTLLLWGHLLELWTPGHS) are cleaved as a signal peptide. Residues 32 to 516 (RLRLSHKELL…SASAVAQVRF (485 aa)) enclose the Sema domain. An N-linked (GlcNAc...) asparagine glycan is attached at Asn-44. A disulfide bridge links Cys-105 with Cys-115. An N-linked (GlcNAc...) asparagine glycan is attached at Asn-126. Cys-133 and Cys-142 are disulfide-bonded. Asn-175 and Asn-330 each carry an N-linked (GlcNAc...) asparagine glycan. 3 cysteine pairs are disulfide-bonded: Cys-270/Cys-382, Cys-294/Cys-342, and Cys-519/Cys-537. The Ig-like C2-type domain occupies 581 to 669 (ALDRTEERLA…NFVHTVRKIT (89 aa)). The N-linked (GlcNAc...) asparagine glycan is linked to Asn-596. Cysteines 654 and 729 form a disulfide.

Belongs to the semaphorin family. Interacts with PLXND1. As to expression, detected in neurons in the thalamus. Detected in embryonic vasculature. Developing lungs, developing skeletal elements and ventral horns of the developing neural tube. Correlates positively with tumor progression.

It localises to the secreted. In terms of biological role, plays an important role in signaling via the cell surface receptor PLXND1. Mediates reorganization of the actin cytoskeleton, leading to the retraction of cell projections. Promotes focal adhesion disassembly and inhibits adhesion of endothelial cells to the extracellular matrix. Regulates angiogenesis, both during embryogenesis and after birth. Can down-regulate sprouting angiogenesis. Required for normal vascular patterning during embryogenesis. Plays an important role in ensuring the specificity of synapse formation. The chain is Semaphorin-3E (Sema3e) from Mus musculus (Mouse).